A 284-amino-acid chain; its full sequence is Shikimate kinase (284 aa).

85–95 (PLAAGLKSSSA) serves as a coordination point for ATP.

Belongs to the GHMP kinase family. Archaeal shikimate kinase subfamily.

It is found in the cytoplasm. The enzyme catalyses shikimate + ATP = 3-phosphoshikimate + ADP + H(+). It participates in metabolic intermediate biosynthesis; chorismate biosynthesis; chorismate from D-erythrose 4-phosphate and phosphoenolpyruvate: step 5/7. The protein is Shikimate kinase of Halobacterium salinarum (strain ATCC 29341 / DSM 671 / R1).